The following is an 855-amino-acid chain: Potassium channel AKT2 (855 aa).

The segment covering 1 to 12 (MKTSSFESASSS) has biased composition (low complexity). The tract at residues 1–24 (MKTSSFESASSSGGSGGGGGGGGG) is disordered. The Cytoplasmic portion of the chain corresponds to 1–75 (MKTSSFESAS…PLDSRYRCWD (75 aa)). Gly residues predominate over residues 13–24 (GGSGGGGGGGGG). The chain crosses the membrane as a helical span at residues 76–96 (TFMVVLVAYSAWVYPFEVAFM). The Extracellular segment spans residues 97-105 (NASPKGGLE). Residues 106 to 126 (VADIVVDLFFAVDIVLTFFVA) form a helical membrane-spanning segment. Over 127-149 (YIDSRTQLLVRDRRRIATRYLST) the chain is Cytoplasmic. The chain crosses the membrane as a helical span at residues 150 to 170 (FFIMDVASTIPFQGLAYIVTG). The Extracellular segment spans residues 171–179 (EVRESPAFS). Residues 180 to 200 (LLGILRLWRLRKVKQFFTRLE) form a helical; Voltage-sensor membrane-spanning segment. Residues 201–214 (KDIRFNYFWIRCAR) lie on the Cytoplasmic side of the membrane. Residues 215-235 (LIAVTLFLVHCAGCLYYLIAD) traverse the membrane as a helical segment. Over 236–262 (RYPHREKTWIGAVIPDFQEASLWIRYT) the chain is Extracellular. Positions 263–282 (SSVYWSITTMTTVGYGDMHA) form an intramembrane region, pore-forming. Over 283–285 (QNT) the chain is Extracellular. The chain crosses the membrane as a helical span at residues 286-306 (VEMIFNIFYMLFNLGLTAYLI). Residues 307-855 (GNMTNLVVEG…VASMDSVSGS (549 aa)) are Cytoplasmic-facing. 391 to 511 (LFKGVSREVL…VVIIKNFLKH (121 aa)) lines the a nucleoside 3',5'-cyclic phosphate pocket. ANK repeat units follow at residues 536-565 (NIPC…DPDV), 569-598 (KGRT…NVNI), 602-631 (QGNT…VSSP), 634-663 (AAGD…AVDS), and 667-696 (DGAT…SVDR). A disordered region spans residues 744–765 (EVGSSGDSRNGRRQSARSDGAH). In terms of domain architecture, KHA spans 768–855 (RVSIYRGHPF…VASMDSVSGS (88 aa)).

Belongs to the potassium channel family. Plant (TC 1.A.1.4) subfamily. As to quaternary structure, the potassium channel is probably a homo- or heterotetrameric complex of pore-forming subunits.

It is found in the membrane. Its function is as follows. Probable inward-rectifying potassium channel. Assuming opened or closed conformations in response to the voltage difference across the membrane, the channel is activated by hyperpolarization. The polypeptide is Potassium channel AKT2 (Oryza sativa subsp. japonica (Rice)).